A 90-amino-acid chain; its full sequence is MAAVKFLVCSVLLVVLATQSEIGLAQNCSAAIGGLMSCGPYVLPGNQLTPSTQCCSAIQAVNHGCLCETINIISSLPGHCSLPPVSCGTA.

An N-terminal signal peptide occupies residues 1–26; that stretch reads MAAVKFLVCSVLLVVLATQSEIGLAQ. Intrachain disulfides connect cysteine 28–cysteine 65, cysteine 38–cysteine 54, cysteine 55–cysteine 80, and cysteine 67–cysteine 87.

Belongs to the A9/FIL1 family.

Its subcellular location is the secreted. The polypeptide is Protein LIM3 (LIM3) (Lilium longiflorum (Trumpet lily)).